A 451-amino-acid polypeptide reads, in one-letter code: Phosphoglucosamine mutase (451 aa).

Catalysis depends on Ser101, which acts as the Phosphoserine intermediate. The Mg(2+) site is built by Ser101, Asp243, Asp245, and Asp247. Ser101 carries the post-translational modification Phosphoserine.

The protein belongs to the phosphohexose mutase family. Mg(2+) serves as cofactor. Activated by phosphorylation.

The enzyme catalyses alpha-D-glucosamine 1-phosphate = D-glucosamine 6-phosphate. In terms of biological role, catalyzes the conversion of glucosamine-6-phosphate to glucosamine-1-phosphate. The sequence is that of Phosphoglucosamine mutase from Thermodesulfovibrio yellowstonii (strain ATCC 51303 / DSM 11347 / YP87).